The following is a 348-amino-acid chain: MSVKLQICDSTLRDGNHAVAHQLGRADISAYARAAEEAGVDVLEVGHGNGLGASSIQVGIAAVSDAEMLRAAKAELRNSRLGVLSIPGFASVERDLKPALDCGVDEVRVGAHCTEADVTRQQITMLRSMGVRVKGLLLMSHMASAGKLVEQAGLMQEYGAEAVVLMDSAGAYTPEMVREKVGELVEKLDIAIGFHAHNNLGLSVINSITAVRAGASIVDVTARGFGAGAGNAPIELVAANLHVEQIEARIKLFDALDAADTAEERFVKHVPTNDGVTIASGIAGVFSGFAAPVRRASRRFGVDPREILLELGRRRVVAGQEDTIIEVAMALAAEAASADLTHAFVDHI.

The region spanning 5–256 (LQICDSTLRD…EARIKLFDAL (252 aa)) is the Pyruvate carboxyltransferase domain. 13-14 (RD) lines the substrate pocket. Aspartate 14 contributes to the Mn(2+) binding site. Histidine 17 (proton acceptor) is an active-site residue. Substrate contacts are provided by serine 168 and histidine 195. Residues histidine 195 and histidine 197 each coordinate Mn(2+).

This sequence belongs to the 4-hydroxy-2-oxovalerate aldolase family.

The catalysed reaction is (S)-4-hydroxy-2-oxopentanoate = acetaldehyde + pyruvate. The chain is 4-hydroxy-2-oxovalerate aldolase 2 from Salinispora arenicola (strain CNS-205).